Consider the following 298-residue polypeptide: MDQKQIEEIVRSVMASMGQDVPQPVAPSTQEGAKPQCAAPTVTESCALDLGSAEAKAWIGVENPHRADVLTELRRSTAARVCTGRAGPRPRTQALLRFLADHSRSKDTVLKEVPEEWVKAQGLLEVRSEISDKNLYLTRPDMGRRLSPEAIDALKSQCVMNPDVQVVVSDGLSTDAITANYEEILPPLLAGLKQAGLNVGTPFFVRYGRVKIEDQIGEILGAKVVILLVGERPGLGQSESLSCYAVYSPRVATTVEADRTCISNIHQGGTPPVEAAAVIVDLAKRMLEQKASGINMTR.

Positions 210, 231, and 261 each coordinate adenosylcob(III)alamin.

The protein belongs to the EutC family. In terms of assembly, the basic unit is a heterodimer which dimerizes to form tetramers. The heterotetramers trimerize; 6 large subunits form a core ring with 6 small subunits projecting outwards. Requires adenosylcob(III)alamin as cofactor.

Its subcellular location is the bacterial microcompartment. The enzyme catalyses ethanolamine = acetaldehyde + NH4(+). The protein operates within amine and polyamine degradation; ethanolamine degradation. In terms of biological role, catalyzes the deamination of various vicinal amino-alcohols to oxo compounds. Allows this organism to utilize ethanolamine as the sole source of nitrogen and carbon in the presence of external vitamin B12. This is Ethanolamine ammonia-lyase small subunit from Salmonella dublin (strain CT_02021853).